The sequence spans 239 residues: Purine nucleoside phosphorylase DeoD-type (239 aa).

Histidine 5 provides a ligand contact to a purine D-ribonucleoside. Phosphate is bound by residues glycine 21, arginine 25, arginine 44, and 88–91 (RVGS). A purine D-ribonucleoside-binding positions include 180–182 (EME) and 204–205 (SD). Aspartate 205 serves as the catalytic Proton donor.

Belongs to the PNP/UDP phosphorylase family. Homohexamer; trimer of homodimers.

It carries out the reaction a purine D-ribonucleoside + phosphate = a purine nucleobase + alpha-D-ribose 1-phosphate. The catalysed reaction is a purine 2'-deoxy-D-ribonucleoside + phosphate = a purine nucleobase + 2-deoxy-alpha-D-ribose 1-phosphate. Catalyzes the reversible phosphorolytic breakdown of the N-glycosidic bond in the beta-(deoxy)ribonucleoside molecules, with the formation of the corresponding free purine bases and pentose-1-phosphate. In Erwinia tasmaniensis (strain DSM 17950 / CFBP 7177 / CIP 109463 / NCPPB 4357 / Et1/99), this protein is Purine nucleoside phosphorylase DeoD-type.